Reading from the N-terminus, the 344-residue chain is DNA-directed RNA polymerase subunit alpha (344 aa).

Residues 1–246 form an alpha N-terminal domain (alpha-NTD) region; the sequence is MLVEKFLKDF…EFLFPLVDFE (246 aa). Residues 259-344 are alpha C-terminal domain (alpha-CTD); that stretch reads ESSNLLDMSI…VLSKNVKISE (86 aa).

The protein belongs to the RNA polymerase alpha chain family. As to quaternary structure, homodimer. The RNAP catalytic core consists of 2 alpha, 1 beta, 1 beta' and 1 omega subunit. When a sigma factor is associated with the core the holoenzyme is formed, which can initiate transcription.

It catalyses the reaction RNA(n) + a ribonucleoside 5'-triphosphate = RNA(n+1) + diphosphate. Its function is as follows. DNA-dependent RNA polymerase catalyzes the transcription of DNA into RNA using the four ribonucleoside triphosphates as substrates. The chain is DNA-directed RNA polymerase subunit alpha from Borreliella burgdorferi (strain ATCC 35210 / DSM 4680 / CIP 102532 / B31) (Borrelia burgdorferi).